A 278-amino-acid chain; its full sequence is 3-methyl-2-oxobutanoate hydroxymethyltransferase (278 aa).

Mg(2+) is bound by residues Asp-43 and Asp-82. 3-methyl-2-oxobutanoate-binding positions include 43–44 (DS), Asp-82, and Lys-112. Position 114 (Glu-114) interacts with Mg(2+). The active-site Proton acceptor is the Glu-181.

Belongs to the PanB family. As to quaternary structure, homodecamer; pentamer of dimers. The cofactor is Mg(2+).

It is found in the cytoplasm. It carries out the reaction 3-methyl-2-oxobutanoate + (6R)-5,10-methylene-5,6,7,8-tetrahydrofolate + H2O = 2-dehydropantoate + (6S)-5,6,7,8-tetrahydrofolate. Its pathway is cofactor biosynthesis; (R)-pantothenate biosynthesis; (R)-pantoate from 3-methyl-2-oxobutanoate: step 1/2. In terms of biological role, catalyzes the reversible reaction in which hydroxymethyl group from 5,10-methylenetetrahydrofolate is transferred onto alpha-ketoisovalerate to form ketopantoate. The chain is 3-methyl-2-oxobutanoate hydroxymethyltransferase from Bacillus cereus (strain B4264).